The primary structure comprises 125 residues: Small ribosomal subunit protein eS8 (125 aa).

This sequence belongs to the eukaryotic ribosomal protein eS8 family. In terms of assembly, part of the 30S ribosomal subunit.

This Methanosarcina mazei (strain ATCC BAA-159 / DSM 3647 / Goe1 / Go1 / JCM 11833 / OCM 88) (Methanosarcina frisia) protein is Small ribosomal subunit protein eS8.